Consider the following 1666-residue polypeptide: Probable clathrin heavy chain (1666 aa).

WD40-like repeat stretches follow at residues 24 to 67 (SFGF…RPIS), 68 to 107 (ADSV…MNQD), 108 to 148 (VVYW…SSLN), 149 to 194 (GTQI…QPLE), 195 to 255 (SHAS…PEAV), 256 to 299 (NDFP…VSGE), and 300 to 328 (SIFV…VSIN). T392 carries the post-translational modification Phosphothreonine. At S393 the chain carries Phosphoserine. CHCR repeat units lie at residues 534-680 (MFNS…QIVV), 683-825 (ATRY…DEEL), 830-969 (LMSV…LLDQ), 975-1120 (VPES…IPDA), 1124-1265 (YLKA…FRLA), 1270-1415 (LNLI…MLLT), and 1418-1561 (LAAL…YECF).

The protein belongs to the clathrin heavy chain family. As to quaternary structure, clathrin triskelions, composed of 3 heavy chains and 3 light chains, are the basic subunits of the clathrin coat.

The protein resides in the cytoplasmic vesicle membrane. The protein localises to the membrane. It localises to the coated pit. In terms of biological role, clathrin is the major protein of the polyhedral coat of coated pits and vesicles. The sequence is that of Probable clathrin heavy chain (chc1) from Schizosaccharomyces pombe (strain 972 / ATCC 24843) (Fission yeast).